Reading from the N-terminus, the 39-residue chain is Photosystem II reaction center protein J (39 aa).

Residues 7 to 27 traverse the membrane as a helical segment; that stretch reads IPLWLIATVGGTAALTVVGLF.

Belongs to the PsbJ family. As to quaternary structure, PSII is composed of 1 copy each of membrane proteins PsbA, PsbB, PsbC, PsbD, PsbE, PsbF, PsbH, PsbI, PsbJ, PsbK, PsbL, PsbM, PsbT, PsbX, PsbY, PsbZ, Psb30/Ycf12, at least 3 peripheral proteins of the oxygen-evolving complex and a large number of cofactors. It forms dimeric complexes.

It localises to the plastid. It is found in the chloroplast thylakoid membrane. Functionally, one of the components of the core complex of photosystem II (PSII). PSII is a light-driven water:plastoquinone oxidoreductase that uses light energy to abstract electrons from H(2)O, generating O(2) and a proton gradient subsequently used for ATP formation. It consists of a core antenna complex that captures photons, and an electron transfer chain that converts photonic excitation into a charge separation. The polypeptide is Photosystem II reaction center protein J (Rhodomonas salina (Cryptomonas salina)).